The sequence spans 124 residues: UPF0538 protein (124 aa).

Belongs to the UPF0538 family.

The protein is UPF0538 protein of Dictyostelium discoideum (Social amoeba).